Consider the following 145-residue polypeptide: Bacilliredoxin SH1401 (145 aa).

Belongs to the bacilliredoxin family.

This Staphylococcus haemolyticus (strain JCSC1435) protein is Bacilliredoxin SH1401.